We begin with the raw amino-acid sequence, 125 residues long: Cu-Zn superoxide dismutase-like protein OPG175 (125 aa).

A disulfide bridge connects residues Cys52 and Cys102.

Belongs to the Cu-Zn superoxide dismutase family.

It localises to the virion. The protein localises to the host cytoplasm. Functionally, superoxide dismutase-like protein with no enzymatic activity. The sequence is that of Cu-Zn superoxide dismutase-like protein OPG175 (OPG175) from Monkeypox virus.